A 642-amino-acid chain; its full sequence is RNA polymerase sigma factor RpoD (642 aa).

The tract at residues 199–228 (HLETTAPEKPSNDNSDENEDDEESEEDADE) is disordered. A compositionally biased stretch (acidic residues) spans 212-228 (NSDENEDDEESEEDADE). The tract at residues 403–473 (MIQANLRLVI…TRSIADQART (71 aa)) is sigma-70 factor domain-2. Positions 427-430 (DLIQ) match the Interaction with polymerase core subunit RpoC motif. Residues 482–558 (ETINKMNRIS…DANNVAPADA (77 aa)) are sigma-70 factor domain-3. Positions 571–624 (ILESLTPREAKVLRMRFGIDMNTDHTLEEVGRQFDVTRERIRQIEAKALRKLRH) are sigma-70 factor domain-4. The H-T-H motif DNA-binding region spans 597–616 (LEEVGRQFDVTRERIRQIEA).

This sequence belongs to the sigma-70 factor family. RpoD/SigA subfamily. Interacts transiently with the RNA polymerase catalytic core.

The protein localises to the cytoplasm. In terms of biological role, sigma factors are initiation factors that promote the attachment of RNA polymerase to specific initiation sites and are then released. This sigma factor is the primary sigma factor during exponential growth. This Neisseria gonorrhoeae protein is RNA polymerase sigma factor RpoD.